A 621-amino-acid chain; its full sequence is UvrABC system protein C (621 aa).

One can recognise a GIY-YIG domain in the interval 20–98; it reads MAPGVYCMYA…IKSLAPRYNV (79 aa). A UVR domain is found at 207 to 242; that stretch reads DLLAEELIQAMQVASEHLEFEQAARLRDLLTSLRSM.

Belongs to the UvrC family. Interacts with UvrB in an incision complex.

The protein localises to the cytoplasm. The UvrABC repair system catalyzes the recognition and processing of DNA lesions. UvrC both incises the 5' and 3' sides of the lesion. The N-terminal half is responsible for the 3' incision and the C-terminal half is responsible for the 5' incision. The polypeptide is UvrABC system protein C (Xylella fastidiosa (strain 9a5c)).